We begin with the raw amino-acid sequence, 226 residues long: Thymidylate kinase (226 aa).

12-19 serves as a coordination point for ATP; that stretch reads GIDGAGKS.

This sequence belongs to the thymidylate kinase family.

It catalyses the reaction dTMP + ATP = dTDP + ADP. Its function is as follows. Phosphorylation of dTMP to form dTDP in both de novo and salvage pathways of dTTP synthesis. This is Thymidylate kinase from Verminephrobacter eiseniae (strain EF01-2).